A 357-amino-acid chain; its full sequence is Beta-hexosaminidase (357 aa).

Residues D66, R74, R140, and K170 to H171 each bind substrate. H183 functions as the Proton donor/acceptor in the catalytic mechanism. The Nucleophile role is filled by D254.

It belongs to the glycosyl hydrolase 3 family. NagZ subfamily.

It localises to the cytoplasm. It carries out the reaction Hydrolysis of terminal non-reducing N-acetyl-D-hexosamine residues in N-acetyl-beta-D-hexosaminides.. It participates in cell wall biogenesis; peptidoglycan recycling. In terms of biological role, plays a role in peptidoglycan recycling by cleaving the terminal beta-1,4-linked N-acetylglucosamine (GlcNAc) from peptide-linked peptidoglycan fragments, giving rise to free GlcNAc, anhydro-N-acetylmuramic acid and anhydro-N-acetylmuramic acid-linked peptides. The chain is Beta-hexosaminidase from Chromobacterium violaceum (strain ATCC 12472 / DSM 30191 / JCM 1249 / CCUG 213 / NBRC 12614 / NCIMB 9131 / NCTC 9757 / MK).